Here is a 146-residue protein sequence, read N- to C-terminus: Large ribosomal subunit protein uL15 (146 aa).

Residues Met1 to Arg59 form a disordered region. Positions Thr30 to Lys39 are enriched in basic residues. Gly residues predominate over residues Ser42–Gly52.

Belongs to the universal ribosomal protein uL15 family. As to quaternary structure, part of the 50S ribosomal subunit.

In terms of biological role, binds to the 23S rRNA. The protein is Large ribosomal subunit protein uL15 of Syntrophomonas wolfei subsp. wolfei (strain DSM 2245B / Goettingen).